The following is a 391-amino-acid chain: Phosphoglycerate kinase (391 aa).

Substrate contacts are provided by residues 21–23 (DLN), R36, 59–62 (HLGR), R113, and R146. Residues K197, E319, and 345-348 (GGDT) each bind ATP.

This sequence belongs to the phosphoglycerate kinase family. In terms of assembly, monomer.

It is found in the cytoplasm. It carries out the reaction (2R)-3-phosphoglycerate + ATP = (2R)-3-phospho-glyceroyl phosphate + ADP. Its pathway is carbohydrate degradation; glycolysis; pyruvate from D-glyceraldehyde 3-phosphate: step 2/5. This is Phosphoglycerate kinase from Shewanella sp. (strain MR-7).